Here is a 1187-residue protein sequence, read N- to C-terminus: Probable histidine kinase 5 (1187 aa).

The Extracellular segment spans residues 1-175 (MSRVGECGGG…QNNALSFNHG (175 aa)). The chain crosses the membrane as a helical span at residues 176-196 (MIFSLSASLGIVVILVVITIF). At 197–226 (KRGKQANELCQHEKLLQTPSVKISRKWSKR) the chain is on the cytoplasmic side. A helical membrane pass occupies residues 227–247 (ALLLGVLVGLCSSVWIFSSMH). Residues 248–531 (ADVVARRIEN…FKHAPSLPWS (284 aa)) are Extracellular-facing. The region spanning 295–519 (NPSAIDQKTF…GDPTRKHVMH (225 aa)) is the CHASE domain. Residues 532–552 (AIMISSAVAIIVLLVGYIIYA) form a helical membrane-spanning segment. Residues 553–1187 (TLNSLEEAED…LEADATDPLT (635 aa)) are Cytoplasmic-facing. A Histidine kinase domain is found at 587 to 862 (TVSHEIRTPM…TFSFTAIFKE (276 aa)). His-590 carries the phosphohistidine; by autocatalysis modification. Response regulatory domains are found at residues 886–1017 (RALV…SKAL) and 1041–1178 (NILV…AHFL). 4-aspartylphosphate is present on residues Asp-942 and Asp-1091.

In terms of processing, activation probably requires a transfer of a phosphate group between a His in the transmitter domain and an Asp of the receiver domain. Highly expressed in young leaves and at lower levels in roots, mature leaves, stems and spikelets.

It is found in the cell membrane. The catalysed reaction is ATP + protein L-histidine = ADP + protein N-phospho-L-histidine.. Functionally, cytokinin receptor related to bacterial two-component regulators. Functions as a histidine kinase and transmits the stress signal to a downstream MAPK cascade. This chain is Probable histidine kinase 5, found in Oryza sativa subsp. japonica (Rice).